Consider the following 281-residue polypeptide: NADPH-dependent 7-cyano-7-deazaguanine reductase (281 aa).

I88–S90 contacts substrate. Position 90–91 (S90–K91) interacts with NADPH. The Thioimide intermediate role is filled by C189. The Proton donor role is filled by D196. H228–E229 contributes to the substrate binding site. Residue R257–G258 coordinates NADPH.

It belongs to the GTP cyclohydrolase I family. QueF type 2 subfamily. Homodimer.

It is found in the cytoplasm. It catalyses the reaction 7-aminomethyl-7-carbaguanine + 2 NADP(+) = 7-cyano-7-deazaguanine + 2 NADPH + 3 H(+). Its pathway is tRNA modification; tRNA-queuosine biosynthesis. Catalyzes the NADPH-dependent reduction of 7-cyano-7-deazaguanine (preQ0) to 7-aminomethyl-7-deazaguanine (preQ1). The protein is NADPH-dependent 7-cyano-7-deazaguanine reductase of Erwinia tasmaniensis (strain DSM 17950 / CFBP 7177 / CIP 109463 / NCPPB 4357 / Et1/99).